The primary structure comprises 1292 residues: Zinc finger protein 423 (1292 aa).

Residues 1-11 (MSRRKQAKPRS) show a composition bias toward basic residues. Disordered regions lie at residues 1-21 (MSRR…EASD), 33-70 (AGGL…EDVE), and 95-125 (AHRC…SPTQ). Residues 41 to 54 (ECDRKTSRALEDRN) show a composition bias toward basic and acidic residues. Phosphoserine is present on residues serine 55 and serine 58. The segment at 75–101 (YTCDHCQQDFESLADLTDHRAHRCPGD) adopts a C2H2-type 1; degenerate zinc-finger fold. Positions 110–125 (WVASSPSSKDVASPTQ) are enriched in polar residues. C2H2-type zinc fingers lie at residues 146–168 (YPCQ…EQIH), 174–196 (FKCT…IKLH), 202–224 (YHCH…LKTH), 230–252 (FKCS…MQAH), 271–294 (FMCD…LTLH), 303–326 (LQCI…HQAH), and 331–353 (HKCP…LDSH). The segment at 354–407 (RQPDSSNHSVSPDPVLGSVASMSSATPDSSASVERGSTPDSTLKPLRGQKKMRD) is disordered. The segment covering 371 to 385 (SVASMSSATPDSSAS) has biased composition (low complexity). The C2H2-type 9; degenerate zinc finger occupies 417-441 (YSCPYCSKRDFTSLAVLEIHLKTIH). 3 consecutive C2H2-type zinc fingers follow at residues 449–472 (HTCQ…RKLH), 488–511 (FHCN…RVSH), and 525–548 (FFCN…QQAH). The segment at 571-596 (YSCPYCTNSPIFGSILKLTKHIKENH) adopts a C2H2-type 13; atypical zinc-finger fold. Positions 598–635 (NIPLAHSKKSKAEQSPVSSDVEVSSPKRQRLSGSANSI) are disordered. Serine 612 is modified (phosphoserine). Low complexity predominate over residues 612–623 (SPVSSDVEVSSP). 7 consecutive C2H2-type zinc fingers follow at residues 640–662 (YPCN…LKLH), 670–692 (QACP…LTVH), 700–723 (YVCE…LDMH), 728–751 (YHCT…AVKH), 758–781 (YRCT…KHSH), 789–811 (HKCI…ITTH), and 815–838 (YNCR…REKH). The C2H2-type 21; degenerate zinc finger occupies 894 to 916 (YGCDICGAAYTMEVLLQNHRLRD). 3 consecutive C2H2-type zinc fingers follow at residues 938-960 (HKCN…LQTH), 967-989 (YMCP…KVTH), and 1028-1050 (FRCV…GTFH). Serine 1062 is subject to Phosphoserine. A C2H2-type 25; degenerate zinc finger spans residues 1072 to 1090 (YKCALCLKEFRSKQDLVRL). 5 consecutive C2H2-type zinc fingers follow at residues 1128–1151 (LRCP…QVDH), 1176–1198 (YQCI…VANH), 1206–1228 (HECK…LIEH), 1237–1260 (FKCP…FAVH), and 1267–1290 (YDCS…MSQH). Positions 1144–1155 (ESHMQVDHRDLT) are enriched in basic and acidic residues. A disordered region spans residues 1144-1171 (ESHMQVDHRDLTPETSGPRKGAQTSPVP).

The protein belongs to the krueppel C2H2-type zinc-finger protein family. As to quaternary structure, homodimer. Interacts with SMAD1 and SMAD4. Interacts with EBF1. Interacts with PARP1. Interacts with CEP290. In terms of tissue distribution, within the cerebellum, Zfp423 is expressed in both ventricular and external germinal zones. Transiently expressed in newly differentiating olfactory-receptor neurons.

Its subcellular location is the nucleus. In terms of biological role, transcription factor that can both act as an activator or a repressor depending on the context. Plays a central role in BMP signaling and olfactory neurogenesis. Associates with SMADs in response to BMP2 leading to activate transcription of BMP target genes. Acts as a transcriptional repressor via its interaction with EBF1, a transcription factor involved in terminal olfactory receptor neurons differentiation; this interaction preventing EBF1 to bind DNA and activate olfactory-specific genes. Involved in olfactory neurogenesis by participating in a developmental switch that regulates the transition from differentiation to maturation in olfactory receptor neurons. Controls proliferation and differentiation of neural precursors in cerebellar vermis formation. This chain is Zinc finger protein 423 (Znf423), found in Mus musculus (Mouse).